The sequence spans 226 residues: Charged multivesicular body protein 4 (226 aa).

The stretch at Ile22–Gln88 forms a coiled coil. The tract at residues Gln169–Asn226 is disordered.

This sequence belongs to the SNF7 family. As to quaternary structure, homopolymer; forms elongated striated filaments of uniform ~10nm width. Monomers interact in a staggered arrangement mediated by complementary charged electrostatic surfaces. Interacts with l(2)gd1 (via DM14 domains 1 and 3); the interaction is direct and blocks access to the surface involved in homopolymerization. This interaction may be required for the ESCRT-III complex role in multivesicular body formation. Expressed at considerably higher levels in testis than in ovary. Expressed in midgut, eye, mouthparts and male accessory gland.

Its subcellular location is the endosome. The protein resides in the multivesicular body. The protein localises to the midbody. May be regulated by aurB/Aurora kinase B-dependent phosphorylation. Its function is as follows. Probable core polymerisation component of the endosomal sorting required for transport (ESCRT) III complex involved in multiple cellular processes requiring the outward bending of membranes, including vesicle budding, membrane repair and cytokinesis. The ESCRT pathway involves 4 complexes (ESCRT-0, -I, -II and -III) that sequentially assemble on the cytoplasmic side of membranes and induce membrane remodeling, budding and scission. As part of the ESCRT-III complex, involved in the budding of intraluminal vesicles (ILVs) into endosomes to form multivesicular bodies (MVBs), which target their contents for degradation via the endolysosomal pathway. Involved in regulation of signal transduction pathways, including the Notch and BMP/decapentaplegic (dpp) pathways, by sequestering the intracellular domains of activated receptors into ILVs, isolating them from the cytoplasm and targeting them for lysosomal degradation. Involved in targeting ubiquitilated proteins, such as mono-ubiquitilanated N/Notch, to MVBs for degradation. Plays a role in wing development by regulating Notch signaling. Involved in abscission of germline cells during oogenesis. Involved in spermiogenesis. Required for efficient cytoplasmic isolation and abscission during cytokinesis of epithelial sensory organ precursor cells. May be involved in septate junction remodeling and maintenance. This chain is Charged multivesicular body protein 4, found in Drosophila melanogaster (Fruit fly).